The following is a 294-amino-acid chain: Putative maltodextrin utilization protein YvdJ (294 aa).

4 helical membrane-spanning segments follow: residues 35-55, 184-204, 228-248, and 249-269; these read LSFL…VSFV, MIMM…TFVL, IAIC…MVHF, and DLIT…SFAF.

The protein resides in the cell membrane. Its function is as follows. Could have a role in maltodextrin utilization. This Bacillus subtilis (strain 168) protein is Putative maltodextrin utilization protein YvdJ (yvdJ).